The primary structure comprises 193 residues: Xanthine phosphoribosyltransferase (193 aa).

L20 and N27 together coordinate xanthine. 128–132 contributes to the 5-phospho-alpha-D-ribose 1-diphosphate binding site; the sequence is ANGDA. K156 contributes to the xanthine binding site.

It belongs to the purine/pyrimidine phosphoribosyltransferase family. Xpt subfamily. As to quaternary structure, homodimer.

Its subcellular location is the cytoplasm. It carries out the reaction XMP + diphosphate = xanthine + 5-phospho-alpha-D-ribose 1-diphosphate. It functions in the pathway purine metabolism; XMP biosynthesis via salvage pathway; XMP from xanthine: step 1/1. Converts the preformed base xanthine, a product of nucleic acid breakdown, to xanthosine 5'-monophosphate (XMP), so it can be reused for RNA or DNA synthesis. The protein is Xanthine phosphoribosyltransferase of Staphylococcus saprophyticus subsp. saprophyticus (strain ATCC 15305 / DSM 20229 / NCIMB 8711 / NCTC 7292 / S-41).